The sequence spans 500 residues: Lysine--tRNA ligase (500 aa).

Mg(2+) is bound by residues glutamate 410 and glutamate 417.

The protein belongs to the class-II aminoacyl-tRNA synthetase family. Homodimer. Mg(2+) serves as cofactor.

The protein localises to the cytoplasm. The enzyme catalyses tRNA(Lys) + L-lysine + ATP = L-lysyl-tRNA(Lys) + AMP + diphosphate. The protein is Lysine--tRNA ligase of Pseudomonas putida (strain ATCC 47054 / DSM 6125 / CFBP 8728 / NCIMB 11950 / KT2440).